The sequence spans 341 residues: Anthranilate phosphoribosyltransferase (341 aa).

Residues G79, 82–83 (GD), T87, 89–92 (NIST), 107–115 (KHGNRAVSS), and S119 contribute to the 5-phospho-alpha-D-ribose 1-diphosphate site. G79 contacts anthranilate. Residue S91 participates in Mg(2+) binding. N110 is an anthranilate binding site. R165 serves as a coordination point for anthranilate. D224 and E225 together coordinate Mg(2+).

The protein belongs to the anthranilate phosphoribosyltransferase family. In terms of assembly, homodimer. The cofactor is Mg(2+).

It carries out the reaction N-(5-phospho-beta-D-ribosyl)anthranilate + diphosphate = 5-phospho-alpha-D-ribose 1-diphosphate + anthranilate. It functions in the pathway amino-acid biosynthesis; L-tryptophan biosynthesis; L-tryptophan from chorismate: step 2/5. Functionally, catalyzes the transfer of the phosphoribosyl group of 5-phosphorylribose-1-pyrophosphate (PRPP) to anthranilate to yield N-(5'-phosphoribosyl)-anthranilate (PRA). This Bacillus cereus (strain AH820) protein is Anthranilate phosphoribosyltransferase.